Consider the following 116-residue polypeptide: Ribosome-binding factor A (116 aa).

It belongs to the RbfA family. Monomer. Binds 30S ribosomal subunits, but not 50S ribosomal subunits or 70S ribosomes.

The protein localises to the cytoplasm. In terms of biological role, one of several proteins that assist in the late maturation steps of the functional core of the 30S ribosomal subunit. Associates with free 30S ribosomal subunits (but not with 30S subunits that are part of 70S ribosomes or polysomes). Required for efficient processing of 16S rRNA. May interact with the 5'-terminal helix region of 16S rRNA. The protein is Ribosome-binding factor A of Chlorobium phaeobacteroides (strain DSM 266 / SMG 266 / 2430).